Reading from the N-terminus, the 274-residue chain is NH(3)-dependent NAD(+) synthetase (274 aa).

46 to 53 (GISGGQDS) contacts ATP. Asp-52 is a Mg(2+) binding site. Arg-140 lines the deamido-NAD(+) pocket. Position 160 (Thr-160) interacts with ATP. Glu-165 contacts Mg(2+). Deamido-NAD(+) is bound by residues Lys-173 and Asp-180. Lys-189 and Thr-211 together coordinate ATP. 260-261 (HK) contacts deamido-NAD(+).

It belongs to the NAD synthetase family. Homodimer.

The enzyme catalyses deamido-NAD(+) + NH4(+) + ATP = AMP + diphosphate + NAD(+) + H(+). The protein operates within cofactor biosynthesis; NAD(+) biosynthesis; NAD(+) from deamido-NAD(+) (ammonia route): step 1/1. Its function is as follows. Catalyzes the ATP-dependent amidation of deamido-NAD to form NAD. Uses ammonia as a nitrogen source. This chain is NH(3)-dependent NAD(+) synthetase, found in Streptococcus equi subsp. zooepidemicus (strain MGCS10565).